The following is a 364-amino-acid chain: Spermidine/putrescine import ATP-binding protein PotA (364 aa).

The 231-residue stretch at 6 to 236 (IEIRQIYKSY…PANLHVAMFI (231 aa)) folds into the ABC transporter domain. 38-45 (GPSGCGKT) contributes to the ATP binding site.

This sequence belongs to the ABC transporter superfamily. Spermidine/putrescine importer (TC 3.A.1.11.1) family. As to quaternary structure, the complex is composed of two ATP-binding proteins (PotA), two transmembrane proteins (PotB and PotC) and a solute-binding protein (PotD).

The protein resides in the cell inner membrane. The catalysed reaction is ATP + H2O + polyamine-[polyamine-binding protein]Side 1 = ADP + phosphate + polyamineSide 2 + [polyamine-binding protein]Side 1.. In terms of biological role, part of the ABC transporter complex PotABCD involved in spermidine/putrescine import. Responsible for energy coupling to the transport system. In Legionella pneumophila subsp. pneumophila (strain Philadelphia 1 / ATCC 33152 / DSM 7513), this protein is Spermidine/putrescine import ATP-binding protein PotA.